A 327-amino-acid chain; its full sequence is Biotin synthase (327 aa).

The Radical SAM core domain occupies 52–279; sequence TKVQLSTLVS…ASYVRLSAGR (228 aa). Positions 67, 71, and 74 each coordinate [4Fe-4S] cluster. [2Fe-2S] cluster contacts are provided by Cys111, Cys142, Cys202, and Arg274.

This sequence belongs to the radical SAM superfamily. Biotin synthase family. As to quaternary structure, homodimer. The cofactor is [4Fe-4S] cluster. Requires [2Fe-2S] cluster as cofactor.

It carries out the reaction (4R,5S)-dethiobiotin + (sulfur carrier)-SH + 2 reduced [2Fe-2S]-[ferredoxin] + 2 S-adenosyl-L-methionine = (sulfur carrier)-H + biotin + 2 5'-deoxyadenosine + 2 L-methionine + 2 oxidized [2Fe-2S]-[ferredoxin]. It functions in the pathway cofactor biosynthesis; biotin biosynthesis; biotin from 7,8-diaminononanoate: step 2/2. Functionally, catalyzes the conversion of dethiobiotin (DTB) to biotin by the insertion of a sulfur atom into dethiobiotin via a radical-based mechanism. The chain is Biotin synthase from Chromobacterium violaceum (strain ATCC 12472 / DSM 30191 / JCM 1249 / CCUG 213 / NBRC 12614 / NCIMB 9131 / NCTC 9757 / MK).